The sequence spans 222 residues: MSGLGRLFGKGKKEKGPTPEEAIQKLKETEKILIKKQEFLEQKIQQELQTAKKYGTKNKRAALQALRRKKRFEQQLAQTDGTLSTLEFQREAIENATTNAEVLRTMELAAQSMKKAYQDMDIDKVDELMTDITEQQEVAQQISDAISRPMGFGDDVDEDELLEELEELEQEELAQELLNVGDKEEEPSVKLPSVPSTHLPAGPAPKVDEDEEALKQLAEWVS.

Disordered regions lie at residues 1–21 and 180–211; these read MSGL…TPEE and VGDK…DEDE. The interaction with phosphoinosides stretch occupies residues 1-116; it reads MSGLGRLFGK…ELAAQSMKKA (116 aa). The intramolecular interaction with C-terminus stretch occupies residues 1–150; that stretch reads MSGLGRLFGK…QISDAISRPM (150 aa). 2 coiled-coil regions span residues 20–105 and 155–180; these read EEAI…VLRT and DVDE…LLNV. The segment at 151 to 222 is intramolecular interaction with N-terminus; that stretch reads GFGDDVDEDE…ALKQLAEWVS (72 aa). S196 is modified (phosphoserine).

Belongs to the SNF7 family. Probable core component of the endosomal sorting required for transport complex III (ESCRT-III). ESCRT-III components are thought to multimerize to form a flat lattice on the perimeter membrane of the endosome. Several assembly forms of ESCRT-III may exist that interact and act sequentially. Self-associates; overexpression leads to the assembly of filaments that curve and associate to create circular rings. Interacts with CHMP2A. Interacts with CHMP3; the interaction requires the release of CHMP4A autoinhibition. Interacts with CHMP4B. Interacts with CHMP4C. Interacts with CHMP6. Interacts with VPS4A. Interacts with PDCD6IP; the interaction is direct. As to expression, widely expressed. Expressed at higher level in heart, kidney, liver and skeletal muscle. Also expressed in brain, placenta, lung and pancreas.

The protein resides in the cytoplasmic vesicle membrane. It localises to the late endosome membrane. In terms of biological role, probable core component of the endosomal sorting required for transport complex III (ESCRT-III) which is involved in multivesicular bodies (MVBs) formation and sorting of endosomal cargo proteins into MVBs. MVBs contain intraluminal vesicles (ILVs) that are generated by invagination and scission from the limiting membrane of the endosome and mostly are delivered to lysosomes enabling degradation of membrane proteins, such as stimulated growth factor receptors, lysosomal enzymes and lipids. The MVB pathway appears to require the sequential function of ESCRT-O, -I,-II and -III complexes. ESCRT-III proteins mostly dissociate from the invaginating membrane before the ILV is released. The ESCRT machinery also functions in topologically equivalent membrane fission events, such as the terminal stages of cytokinesis and the budding of enveloped viruses (HIV-1 and other lentiviruses). ESCRT-III proteins are believed to mediate the necessary vesicle extrusion and/or membrane fission activities, possibly in conjunction with the AAA ATPase VPS4. When overexpressed, membrane-assembled circular arrays of CHMP4A filaments can promote or stabilize negative curvature and outward budding. Via its interaction with PDCD6IP involved in HIV-1 p6- and p9-dependent virus release. CHMP4A/B/C are required for the exosomal release of SDCBP, CD63 and syndecan. The protein is Charged multivesicular body protein 4a (CHMP4A) of Homo sapiens (Human).